A 509-amino-acid polypeptide reads, in one-letter code: Glycogen synthase (509 aa).

K47 contributes to the ADP-alpha-D-glucose binding site.

It belongs to the glycosyltransferase 1 family. Bacterial/plant glycogen synthase subfamily.

The catalysed reaction is [(1-&gt;4)-alpha-D-glucosyl](n) + ADP-alpha-D-glucose = [(1-&gt;4)-alpha-D-glucosyl](n+1) + ADP + H(+). Its pathway is glycan biosynthesis; glycogen biosynthesis. Synthesizes alpha-1,4-glucan chains using ADP-glucose. The protein is Glycogen synthase of Xanthomonas oryzae pv. oryzae (strain MAFF 311018).